Here is a 252-residue protein sequence, read N- to C-terminus: Probable truncated L-gulonolactone oxidase 7, mitochondrial (252 aa).

Residues 1 to 102 (MKRSMRSHLA…ELNYGVLVRY (102 aa)) constitute a mitochondrion transit peptide.

Belongs to the oxygen-dependent FAD-linked oxidoreductase family.

It is found in the mitochondrion. It catalyses the reaction L-gulono-1,4-lactone + O2 = L-ascorbate + H2O2 + H(+). It functions in the pathway cofactor biosynthesis; L-ascorbate biosynthesis. In terms of biological role, may be involved in the biosynthesis of ascorbic acid. The sequence is that of Probable truncated L-gulonolactone oxidase 7, mitochondrial from Arabidopsis thaliana (Mouse-ear cress).